A 504-amino-acid chain; its full sequence is Diacylglycerol O-acyltransferase 1B (504 aa).

Positions 1 to 72 (MAISDEPESV…VNSQQQNEKQ (72 aa)) are disordered. Residues 24–41 (SATSTAGLFNSPETTTDS) show a composition bias toward polar residues. Over residues 53-65 (DDSINSDDAAVNS) the composition is skewed to low complexity. 7 helical membrane-spanning segments follow: residues 108 to 128 (HAGL…RLII), 152 to 172 (WPLF…FIVE), 184 to 204 (VVVV…VLVI), 209 to 229 (SAFV…LKLV), 259 to 279 (YPYN…TLCY), 301 to 321 (LIIF…PIVQ), and 348 to 368 (VWLC…AELL). An FYXDWWN motif motif is present at residues 375-381 (FYKDWWN). The next 3 helical transmembrane spans lie at 416-436 (AAAL…CIAV), 438-458 (CHIF…LVLI), and 471-491 (VGNM…CVLL). His-430 is an active-site residue.

It belongs to the membrane-bound acyltransferase family. Sterol o-acyltransferase subfamily. Highly expressed in flowers and pods. Expressed at low levels in roots, stems and leaves.

It localises to the endoplasmic reticulum membrane. The enzyme catalyses an acyl-CoA + a 1,2-diacyl-sn-glycerol = a triacyl-sn-glycerol + CoA. The protein operates within glycerolipid metabolism; triacylglycerol biosynthesis. In terms of biological role, major contributors to triacylglycerol (TAG) synthesis and oil accumulation in developing seeds. Catalyzes the acylation of the sn-3 hydroxy group of sn-1,2-diacylglycerol using acyl-CoA. Has a marked preference for oleoyl-CoA and sn-1,2-dioleoylglycerol over vernoloyl-CoA and sn-1,2-divernoloylglycerol. The protein is Diacylglycerol O-acyltransferase 1B of Glycine max (Soybean).